The primary structure comprises 90 residues: Small ribosomal subunit protein uS17 (90 aa).

Belongs to the universal ribosomal protein uS17 family. Part of the 30S ribosomal subunit.

Functionally, one of the primary rRNA binding proteins, it binds specifically to the 5'-end of 16S ribosomal RNA. The polypeptide is Small ribosomal subunit protein uS17 (Acidiphilium cryptum (strain JF-5)).